We begin with the raw amino-acid sequence, 4042 residues long: Polyketide synthase-nonribosomal peptide synthetase phmA (4042 aa).

Residues 10–411 (NEPIAIVGSA…GANAHAILEA (402 aa)) form the Ketosynthase family 3 (KS3) domain. An acyl transferase region spans residues 519-837 (VFTGQGAQWA…TGLLSRDRDD (319 aa)). Residues 909–1042 (HELLGTKCPD…GRISALFGPP (134 aa)) form an N-terminal hotdog fold region. A dehydratase (DH) domain region spans residues 909–1208 (HELLGTKCPD…LHTKPLGHAT (300 aa)). A PKS/mFAS DH domain is found at 909–1210 (HELLGTKCPD…TKPLGHATPE (302 aa)). H941 functions as the Proton acceptor; for dehydratase activity in the catalytic mechanism. Positions 1057–1210 (MIDVDPEQFY…TKPLGHATPE (154 aa)) are C-terminal hotdog fold. The Proton donor; for dehydratase activity role is filled by D1117. Residues 1349–1572 (DDMLNDFYVK…VDEHVEFIRN (224 aa)) are methyltransferase (MT) domain. The segment at 2073-2246 (TYWLVGLTGG…AGSVINIGAI (174 aa)) is ketoreductase (KR)domain. Positions 2351-2433 (ATTADEVNEA…ELVSAAQEQL (83 aa)) constitute a Carrier 1 domain. At S2393 the chain carries O-(pantetheine 4'-phosphoryl)serine. 2 disordered regions span residues 2460–2504 (KTET…SKDA) and 2535–2554 (ATRSKTSSSSSSFTSDPEND). A compositionally biased stretch (acidic residues) spans 2479–2490 (EVDEEEQEEDEA). Over residues 2495–2504 (NFFSSASKDA) the composition is skewed to polar residues. Low complexity predominate over residues 2536–2549 (TRSKTSSSSSSFTS). Residues 2584–3019 (RVSPMSFGQA…LGRPPLYDPQ (436 aa)) are condensation. The interval 3047 to 3443 (EMASRFGSQI…TADGLVLEGR (397 aa)) is adenylation. One can recognise a Carrier 2 domain in the interval 3562–3642 (KENKSPESEL…AMLNLISPAS (81 aa)). S3602 bears the O-(pantetheine 4'-phosphoryl)serine mark. Residues 3703–3924 (ITGASGFLGK…DFVSVESVAH (222 aa)) form a reductase-like region.

It belongs to the NRP synthetase family.

The protein operates within mycotoxin biosynthesis. Its function is as follows. Hybrid PKS-NRPS synthetase; part of the gene cluster that mediates the biosynthesis of the mycotoxins phomacins, leucine-derived cytochalasans with potent actin polymerization-inhibitory activities and monocot-specific antigerminative activities. The first step in the pathway is catalyzed by the hybrid PKS-NRPS phmA, assisted by the enoyl reductase phmE, that are responsible for fusion of the leucine precursor and the polyketide backbone to produce a 2-pyrrolidone intermediate. The polyketide synthase module (PKS) of phmA is responsible for the synthesis of the polyketide backbone and the downstream nonribosomal peptide synthetase (NRPS) amidates the carboxyl end of the polyketide with the leucine precursor. Because phmA lacks a designated enoylreductase (ER) domain, the required activity is provided the enoyl reductase phmE. Reduction by the hydrolyase phmG, followed by dehydration and intra-molecular Diels-Alder cyclization by the Diels-Alderase phmD then yield the required isoindolone-fused macrocycle. A number of oxidative steps catalyzed by the tailoring cytochrome P450 monooxygenase phmB, the FAD-linked oxidoreductase phmC and the short-chain dehydrogenase/reductase phmF, are further required to afford the final products, phomacin D and phomacin E. This Phaeosphaeria nodorum (strain SN15 / ATCC MYA-4574 / FGSC 10173) (Glume blotch fungus) protein is Polyketide synthase-nonribosomal peptide synthetase phmA.